The sequence spans 271 residues: Interleukin-1 alpha (271 aa).

A propeptide spanning residues 1–112 (MAKVPDMFED…DSEEEIIKPR (112 aa)) is cleaved from the precursor. Lys-82 bears the N6-acetyllysine mark. Residues 82–86 (KKRRL) are nuclear localization signal (NLS). Phosphoserine is present on Ser-87. 2 N-linked (GlcNAc...) asparagine glycosylation sites follow: Asn-102 and Asn-141.

The protein belongs to the IL-1 family. Monomer. Interacts with TMED10; the interaction mediates the translocation from the cytoplasm into the ERGIC (endoplasmic reticulum-Golgi intermediate compartment) and thereby secretion. Interacts with IL1R1. Interacts with S100A13; this interaction is the first step in the export of IL1A, followed by direct translocation of this complex across the plasma membrane. Post-translationally, acetylated within its nuclear localization sequence, which impacts subcellular localization. In terms of processing, proteolytic processed by CAPN1 in a calcium-dependent manner. Cleavage from 31 kDa precursor to 18 kDa biologically active molecules. Phosphorylated. Phosphorylation greatly enhances susceptibility to digestion and promotes the conversion of pre-IL1A alpha to the biologically active IL1A.

It is found in the nucleus. It localises to the cytoplasm. Its subcellular location is the secreted. Cytokine constitutively present intracellularly in nearly all resting non-hematopoietic cells that plays an important role in inflammation and bridges the innate and adaptive immune systems. After binding to its receptor IL1R1 together with its accessory protein IL1RAP, forms the high affinity interleukin-1 receptor complex. Signaling involves the recruitment of adapter molecules such as MYD88, IRAK1 or IRAK4. In turn, mediates the activation of NF-kappa-B and the three MAPK pathways p38, p42/p44 and JNK pathways. Within the cell, acts as an alarmin and cell death results in its liberation in the extracellular space after disruption of the cell membrane to induce inflammation and alert the host to injury or damage. In addition to its role as a danger signal, which occurs when the cytokine is passively released by cell necrosis, directly senses DNA damage and acts as signal for genotoxic stress without loss of cell integrity. This chain is Interleukin-1 alpha (IL1A), found in Cercocebus atys (Sooty mangabey).